A 309-amino-acid polypeptide reads, in one-letter code: MYTVELGKLVEKMNLENCTPEIDISSIQITQPDVNRPALQLTGFFDYFDSDRVQIIGNVEHAYMQKMEKDHGLGIMKKLMSFKMPCIVFCRGIEVSEDFKEVAIEEGVPIFRTEKTTSSFMAEVIRWLKVELAPRISIHGVLVDVYGEGILIMGESGIGKSEAALELIKRGHRLVTDDLVEIKKVSDDTLIGTAPDITRHFIELRGIGIIDVKTLFGVESVKNTQSIDLVIKLEEWNRDKEYDRLGLEEQYIEFLGNRVVCHNIPIRPGRNLAVICESAAVNYRQKKMGYNAAQELYNRVTNNLLKKSK.

Active-site residues include histidine 139 and lysine 160. Residue 154 to 161 (GESGIGKS) coordinates ATP. Residue serine 161 coordinates Mg(2+). Aspartate 178 serves as the catalytic Proton acceptor; for phosphorylation activity. Proton donor; for dephosphorylation activity. Positions 202–211 (IELRGIGIID) are important for the catalytic mechanism of both phosphorylation and dephosphorylation. Residue glutamate 203 coordinates Mg(2+). The active site involves arginine 244. Residues 265–270 (PIRPGR) are important for the catalytic mechanism of dephosphorylation.

It belongs to the HPrK/P family. In terms of assembly, homohexamer. Mg(2+) is required as a cofactor.

It carries out the reaction [HPr protein]-L-serine + ATP = [HPr protein]-O-phospho-L-serine + ADP + H(+). It catalyses the reaction [HPr protein]-O-phospho-L-serine + phosphate + H(+) = [HPr protein]-L-serine + diphosphate. Its function is as follows. Catalyzes the ATP- as well as the pyrophosphate-dependent phosphorylation of a specific serine residue in HPr, a phosphocarrier protein of the phosphoenolpyruvate-dependent sugar phosphotransferase system (PTS). HprK/P also catalyzes the pyrophosphate-producing, inorganic phosphate-dependent dephosphorylation (phosphorolysis) of seryl-phosphorylated HPr (P-Ser-HPr). The two antagonistic activities of HprK/P are regulated by several intracellular metabolites, which change their concentration in response to the absence or presence of rapidly metabolisable carbon sources (glucose, fructose, etc.) in the growth medium. Therefore, by controlling the phosphorylation state of HPr, HPrK/P is a sensor enzyme that plays a major role in the regulation of carbon metabolism and sugar transport: it mediates carbon catabolite repression (CCR), and regulates PTS-catalyzed carbohydrate uptake and inducer exclusion. In Lachnoclostridium phytofermentans (strain ATCC 700394 / DSM 18823 / ISDg) (Clostridium phytofermentans), this protein is HPr kinase/phosphorylase.